The chain runs to 476 residues: Riboflavin transporter rft-2 (476 aa).

Residues 1–21 (MGCSAATFILVALFGSSSWMG) traverse the membrane as a helical segment. Topologically, residues 22 to 41 (TNSVWMQLPLLTSELPEQWN) are cytoplasmic. A helical membrane pass occupies residues 42–62 (LPSYLAGVVQIACIVPLIYTI). Topologically, residues 63–75 (LHKGVKSFTIPTA) are extracellular. Residues 76-96 (PLIIALLSLACCCQLGLSFFW) form a helical membrane-spanning segment. Over 97–113 (SDYSEIFGAPRSWPLYS) the chain is Cytoplasmic. The chain crosses the membrane as a helical span at residues 114–134 (LLFGLAIVNAMSNVLFMPFMA). The Extracellular portion of the chain corresponds to 135 to 140 (QFHPAY). A helical membrane pass occupies residues 141 to 161 (LNAYFVGMGLSSLAPSLLSLA). At 162-185 (QGTSMFKCDEKGVAERFPPNFSVS) the chain is on the cytoplasmic side. Residues 186-206 (IFFFVIFSFTCVALFAFIALY) form a helical membrane-spanning segment. At 207-306 (RSGAHTHFAT…HPVDYITGVK (100 aa)) the chain is on the extracellular side. The interval 215–249 (ATPNKKEPNEGTPLKKDLNNTSSSRKGDDEDESPI) is disordered. A compositionally biased stretch (basic and acidic residues) spans 218–232 (NKKEPNEGTPLKKDL). Residue Asn233 is glycosylated (N-linked (GlcNAc...) asparagine). A helical membrane pass occupies residues 307 to 327 (FTFLLFTTALVNAQMNGIITS). Over 328–342 (VQSYAALPYSQATYH) the chain is Cytoplasmic. Residues 343 to 363 (FAVTLSNVVSPLSSFLPFFIS) traverse the membrane as a helical segment. At 364 to 366 (VRS) the chain is on the extracellular side. Residues 367–387 (IPVLAILTACSTAMTAFIVYL) form a helical membrane-spanning segment. At 388-393 (AALSPN) the chain is on the cytoplasmic side. The helical transmembrane segment at 394 to 414 (LIFNSVTIGSALSIGGSLIAA) threads the bilayer. The Extracellular segment spans residues 415–437 (GLHSYLRVVFASLLREGHQSESR). The helical transmembrane segment at 438-458 (LFWCGVFIQIGSFIGSAVMFP) threads the bilayer. Over 459-476 (LVNIAHLFTSAPQCKSIS) the chain is Cytoplasmic.

Belongs to the riboflavin transporter family. As to expression, expressed in intestine and pharynx.

The protein resides in the cell membrane. The enzyme catalyses riboflavin(in) = riboflavin(out). Riboflavin transporter. In Caenorhabditis elegans, this protein is Riboflavin transporter rft-2.